We begin with the raw amino-acid sequence, 250 residues long: PHD finger protein ALFIN-LIKE 3 (250 aa).

Methionine 1 carries the N-acetylmethionine modification. The disordered stretch occupies residues 146–192; that stretch reads DKSSAANQNGNKSKSNSKVRTSEGKSSKTKQPKEEDEEIDEDDEDDH. Low complexity predominate over residues 149 to 163; that stretch reads SAANQNGNKSKSNSK. Positions 179–192 are enriched in acidic residues; sequence EEDEEIDEDDEDDH. The PHD-type zinc-finger motif lies at 194–246; sequence ETLCGACGDSDGADEFWICCDLCEKWFHGKCVKITPARAEHIKQYKCPSCSNK.

Belongs to the Alfin family. In terms of tissue distribution, ubiquitously expressed.

It is found in the nucleus. Its function is as follows. Histone-binding component that specifically recognizes H3 tails trimethylated on 'Lys-4' (H3K4me3), which mark transcription start sites of virtually all active genes. The chain is PHD finger protein ALFIN-LIKE 3 (AL3) from Arabidopsis thaliana (Mouse-ear cress).